The sequence spans 406 residues: Prisilkin-39 (406 aa).

A signal peptide spans 1–19 (MKGFLTLLLVCAILSTGYC). 2 helical membrane-spanning segments follow: residues 26–48 (ALTG…GAGA) and 58–80 (VGVG…YGGY). Positions 78–197 (GGYSGYGYGY…YSGYSYGYPT (120 aa)) are 10 X 12 AA tandem repeat of G-G-Y-[SG]-G-Y-[GS]-Y-G-Y-P-[AT].

Expression is confined to the prism and organic layers of the shell with no expression detected in the nacreous shell layer. Also expressed in the mantle edge, extrapallial fluid, hemolymph and, to a lesser extent, in the viscus (at protein level). In the mantle, localizes to inner epithelial cells of the outer fold and the outer epithelial cells of the middle fold at the bottom of the periostracal groove.

It localises to the membrane. Functionally, binds chitin and may serve as a framework constituent participating in shell formation. Inhibits aragonite precipitation and may regulate aragonite growth during shell layer formation. Does not affect calcite crystallization. The sequence is that of Prisilkin-39 from Pinctada fucata (Akoya pearl oyster).